A 64-amino-acid polypeptide reads, in one-letter code: Protein DsrB (64 aa).

Belongs to the DsrB family.

In Salmonella arizonae (strain ATCC BAA-731 / CDC346-86 / RSK2980), this protein is Protein DsrB.